Reading from the N-terminus, the 1196-residue chain is Jouberin (1196 aa).

Residues 13 to 45 (KVRFEELLKTHSDLMREKKKLKKKLVRSEENIS) are a coiled coil. Residue Ser-45 is modified to Phosphoserine. 3 disordered regions span residues 56 to 186 (MKET…EEDE), 215 to 242 (QLTYFPSDTLFHDDKLSSEKRKKKKEVP), and 254 to 327 (ISGD…HEIT). Positions 80 to 91 (DDVSAANTNNLK) are enriched in polar residues. Over residues 92–101 (KSTRVTKNKL) the composition is skewed to basic residues. Over residues 102–113 (RNTQLATENPNG) the composition is skewed to polar residues. 3 stretches are compositionally biased toward basic and acidic residues: residues 141–154 (LKPETPENKVDSTH), 166–179 (DHQKSEKANEGREE), and 224–233 (LFHDDKLSSE). The interval 141-434 (LKPETPENKV…VFNENFPYLL (294 aa)) is interaction with HAP1. A compositionally biased stretch (basic residues) spans 300–309 (KPKKTKKKTK). 7 WD repeats span residues 607-649 (AGER…FMRE), 652-691 (GHLNIIYDLSWSKDDHYILTSSSDGTARIWKNEINNTNTF), 695-735 (PHPS…DSAI), 742-781 (VHKSFINSLCFDTEGHHMYSGDCTGVIVVWNTYVKINDLE), 797-837 (EFKG…ARKF), 841-880 (ANYREKIHSTLTPCGTFLFAGSEDGIVYVWNPETGEQVAM), and 885-926 (PFKS…AQQE). The residue at position 1002 (Ser-1002) is a Phosphoserine. The SH3 domain occupies 1051-1111 (DTAPTVVALY…PANHVASETL (61 aa)). Positions 1115-1196 (LPPEIKERSP…QAGRKVTLIE (82 aa)) are disordered. 2 stretches are compositionally biased toward basic and acidic residues: residues 1117-1136 (PEIKERSPPLSPEEKTKIEK) and 1161-1182 (THSEMRKEQSHEDQGHIMDTRM). Ser-1123 is modified (phosphoserine).

Self-associates. Part of the tectonic-like complex (also named B9 complex). Interacts with MKS1. Interacts with NPHP1; probably as heterodimers and/or AHI1(2):NPHP1(2) heterotetramers. Interacts (via SH3 domain) with the dynamin GTPase DNM2. Interacts with HAP1; probably as AHI1(2):HAP1(2) heterotetramers. Interacts with RAB8A. Interacts with CEND1. Interacts with CTNNB1/beta-catenin. Interacts with SPATA7. Highly expressed in the most primitive normal hematopoietic cells. Expressed in brain, particularly in neurons that give rise to the crossing axons of the corticospinal tract and superior cerebellar peduncles. Expressed in kidney (renal collecting duct cells) (at protein level).

Its subcellular location is the cytoplasm. It is found in the cytoskeleton. The protein resides in the cilium basal body. It localises to the cell junction. The protein localises to the adherens junction. Its subcellular location is the microtubule organizing center. It is found in the centrosome. The protein resides in the centriole. Functionally, involved in vesicle trafficking and required for ciliogenesis, formation of primary non-motile cilium, and recruitment of RAB8A to the basal body of primary cilium. Component of the tectonic-like complex, a complex localized at the transition zone of primary cilia and acting as a barrier that prevents diffusion of transmembrane proteins between the cilia and plasma membranes. Involved in neuronal differentiation. As a positive modulator of classical Wnt signaling, may play a crucial role in ciliary signaling during cerebellum embryonic development. This is Jouberin (AHI1) from Homo sapiens (Human).